A 386-amino-acid polypeptide reads, in one-letter code: Trichocyst matrix protein T2-B (386 aa).

A signal peptide spans 1–19 (MKTIILALALIALVSSTQS). The propeptide occupies 20–48 (DVIDTIKKIDQSPFGRTLFDTIWLELQTG). Residues 51–154 (LDRLVSTLTD…AEEHEDFEEK (104 aa)) adopt a coiled-coil conformation. The propeptide occupies 184–238 (KGKAAKQPHKFTKDVANLIQKHFTTSAKKTAKFQHRKGYSKLFKAFATIASKVEQ). Residues 294-325 (ALANAISDLAALNDIIAQVEASLDTTVQRIEN) adopt a coiled-coil conformation.

This sequence belongs to the TMP family.

It localises to the trichocyst. Structural protein that crystallize inside the trichocyst matrix. The sequence is that of Trichocyst matrix protein T2-B (T2B) from Paramecium tetraurelia.